A 161-amino-acid polypeptide reads, in one-letter code: uncharacterized protein (161 aa).

The protein to M.thermoautotrophicum MTH862.

This is an uncharacterized protein from Methanocaldococcus jannaschii (strain ATCC 43067 / DSM 2661 / JAL-1 / JCM 10045 / NBRC 100440) (Methanococcus jannaschii).